We begin with the raw amino-acid sequence, 419 residues long: Synaptic vesicle membrane protein VAT-1 homolog-like (419 aa).

The segment covering 1-25 (MAKEGVEKAEETEQMIEKEAGKEPA) has biased composition (basic and acidic residues). Disordered regions lie at residues 1–36 (MAKEGVEKAEETEQMIEKEAGKEPAEGGGGDGSHRL) and 384–419 (PTPLMANDSTETSEAGEEEEDHEGDSENKERMPFIQ). The residue at position 392 (S392) is a Phosphoserine. Phosphothreonine is present on residues T393 and T395. S396 bears the Phosphoserine mark. Residues 397-407 (EAGEEEEDHEG) show a composition bias toward acidic residues. Positions 408-419 (DSENKERMPFIQ) are enriched in basic and acidic residues.

The protein belongs to the zinc-containing alcohol dehydrogenase family. Quinone oxidoreductase subfamily. As to expression, detected in skin fibroblasts.

This is Synaptic vesicle membrane protein VAT-1 homolog-like (VAT1L) from Homo sapiens (Human).